The primary structure comprises 550 residues: MSTIYALSTVFGKSGVAVFRISGPDALRALELLGLDIKQPRPRFVYFARLFDEQLLIDEVLVVYFASPASFTGEDVVELHSHGSIAVLRYISEKLSTLFKPAEPGEFTRRAVLNNRMDLTKAEGIIDIINSETQEQLKQASRHLSGKLAEEYNSLRDKIIKVLSYLEAYIDFPDEEIPETVLAEIQQSIVAIQCDISRYLADGKVGEKIREGFSVVIVGKPNVGKSTLFNYLAKRDLAIVTDIPGTTRDILEVRLDCHGYPVILSDTAGIQETCDAIEKMGITRALKKATEADVIVFLRDITELHLTNVRREDVANSVIERHLDRQVAALGSREHIQIDQRHVDKLIGSSDWAQEMQLNEAGVRSKNMNYPDIEERDLNLRDILDERHEEKDRSVMCHDMMQEHDPDNGECSDDVDRRFNELFTAAKKLEIPVVKVVTKGDIAPTQLSFWQDKGYICISVYKGEGMQLLLDKIFDIISSSNIEAHIITRARHRLALENALEHLRRFNTDLPIELAAEEIKLAANHIASVTGEIKLDDVLDEIFSSFCIGK.

Residues arginine 20, glutamate 78, and arginine 116 each coordinate (6S)-5-formyl-5,6,7,8-tetrahydrofolate. The TrmE-type G domain occupies 212–478 (GFSVVIVGKP…LLDKIFDIIS (267 aa)). K(+) is bound at residue asparagine 222. GTP-binding positions include 222–227 (NVGKST), 241–247 (TDIPGTT), and 266–269 (DTAG). Serine 226 serves as a coordination point for Mg(2+). K(+) is bound by residues threonine 241, isoleucine 243, and threonine 246. Threonine 247 lines the Mg(2+) pocket. Residue lysine 550 participates in (6S)-5-formyl-5,6,7,8-tetrahydrofolate binding.

Belongs to the TRAFAC class TrmE-Era-EngA-EngB-Septin-like GTPase superfamily. TrmE GTPase family. Homodimer. Heterotetramer of two MnmE and two MnmG subunits. K(+) serves as cofactor.

The protein resides in the cytoplasm. Exhibits a very high intrinsic GTPase hydrolysis rate. Involved in the addition of a carboxymethylaminomethyl (cmnm) group at the wobble position (U34) of certain tRNAs, forming tRNA-cmnm(5)s(2)U34. The chain is tRNA modification GTPase MnmE from Neorickettsia sennetsu (strain ATCC VR-367 / Miyayama) (Ehrlichia sennetsu).